We begin with the raw amino-acid sequence, 344 residues long: Phosphoribosylformylglycinamidine cyclo-ligase (344 aa).

It belongs to the AIR synthase family.

It is found in the cytoplasm. The catalysed reaction is 2-formamido-N(1)-(5-O-phospho-beta-D-ribosyl)acetamidine + ATP = 5-amino-1-(5-phospho-beta-D-ribosyl)imidazole + ADP + phosphate + H(+). The protein operates within purine metabolism; IMP biosynthesis via de novo pathway; 5-amino-1-(5-phospho-D-ribosyl)imidazole from N(2)-formyl-N(1)-(5-phospho-D-ribosyl)glycinamide: step 2/2. The polypeptide is Phosphoribosylformylglycinamidine cyclo-ligase (Neisseria meningitidis serogroup C (strain 053442)).